The sequence spans 375 residues: Queuine tRNA-ribosyltransferase (375 aa).

Aspartate 94 functions as the Proton acceptor in the catalytic mechanism. Substrate contacts are provided by residues 94–98, aspartate 148, glutamine 191, and glycine 218; that span reads DSGGF. The RNA binding stretch occupies residues 249–255; sequence GVGTPED. Aspartate 268 functions as the Nucleophile in the catalytic mechanism. The segment at 273–277 is RNA binding; important for wobble base 34 recognition; the sequence is TRIAR. Positions 306, 308, 311, and 337 each coordinate Zn(2+).

The protein belongs to the queuine tRNA-ribosyltransferase family. Homodimer. Within each dimer, one monomer is responsible for RNA recognition and catalysis, while the other monomer binds to the replacement base PreQ1. It depends on Zn(2+) as a cofactor.

The catalysed reaction is 7-aminomethyl-7-carbaguanine + guanosine(34) in tRNA = 7-aminomethyl-7-carbaguanosine(34) in tRNA + guanine. The protein operates within tRNA modification; tRNA-queuosine biosynthesis. In terms of biological role, catalyzes the base-exchange of a guanine (G) residue with the queuine precursor 7-aminomethyl-7-deazaguanine (PreQ1) at position 34 (anticodon wobble position) in tRNAs with GU(N) anticodons (tRNA-Asp, -Asn, -His and -Tyr). Catalysis occurs through a double-displacement mechanism. The nucleophile active site attacks the C1' of nucleotide 34 to detach the guanine base from the RNA, forming a covalent enzyme-RNA intermediate. The proton acceptor active site deprotonates the incoming PreQ1, allowing a nucleophilic attack on the C1' of the ribose to form the product. After dissociation, two additional enzymatic reactions on the tRNA convert PreQ1 to queuine (Q), resulting in the hypermodified nucleoside queuosine (7-(((4,5-cis-dihydroxy-2-cyclopenten-1-yl)amino)methyl)-7-deazaguanosine). The protein is Queuine tRNA-ribosyltransferase of Caldanaerobacter subterraneus subsp. tengcongensis (strain DSM 15242 / JCM 11007 / NBRC 100824 / MB4) (Thermoanaerobacter tengcongensis).